Here is a 2006-residue protein sequence, read N- to C-terminus: MNDLRQQQMVAATSSSGSESGTAVESAAATSTAGSAGAAGRPQSNCSANSNAKSVAASSTSEEEQRVSSTSSPAQRDQQLNADRDREQEPEPQQQQQREEALQHQHNQPGHITSTTASPPPTLPPPTTPCDDAPSTTGASASASSASGEAPSAASAAGAAGGPMAATALEVESEERDGHKIILKLSKHANPNSNANESQPGGDERRVEPLRIQLPCGGAEGGLVAKQQDAFDADASSCSSSCAEDEVATTLGQQLRNTPHIVPKLTIRAANERRVGSVVPKLTIKLPENPAASGSNSNSGSCSAAVSGAQSAMPAKNDAHLSSLSPASASSSSASSSSSSSSSSSLAEMQTVPKLMIKTTLAGSSCISSSEELPQQQQQIPKLTIKTGGGGQEHVHTVIMTHDLNNAQSIPKLTIKTKSIEMIEDEQAAKLEQQLQPLPKLTIKNLCSPKHKVRAVLEEKPPTAASKLAIPKPTPNPTPAPMTNGGESNSSSQEFCGFSDPDADIAAPASDDVRRNSDDMVIDDSLSKEHDPKIFHNLPPMPASNGIASGGSKASKASKSAQSQHNVVDMVDLTSSPSPGSSPTHVPNNFTGRISPKGLLIDCLRMQTAIGCYVPEEADSRVRPAASPNSNILLSQLTAPAKSFTTTTPKSKSSKYPQLTERLMANGSGTGGGSVIAAESEAVVGPLPAANPAQSIIESIEILDTPDGSPRVAYMDEDSNPMLNKHLQTIHKLAMDHGVEQRMDTQDNNNENHLKRTNSEGNESPSSRLPPSKQRRLDNDENDQQTQNCHDPARKCSESLQALPPSHRSRKQKHERILNTDLEGSLFPPTQQQSISTPDQNGALSSEVEGEDAKAQDPLEPATPQPPPVATPAGTGKKRGRPKRIQNQSSPDGGGAVTPKPGTPQEEANSAVKSRRVQLLRKRLAIDMVSVGQEQADMKAKEKESSVGVPNARVEDGLAETLESPKTRDHRPLRATRRTTTSTNTNLQPTPKSTRKRQSKASVQQSQLPPPTMAQFGSSESESNNNNNSSISFALSAQIDLTMCSSSSSTSSGAAANQQVIGGSGSSSMLPPTTILSSSDPLPDVIFQPNDFSSIMATQQLRSSRPSSISCGSTGGSQPDCHDEDNYTSALDNSGDETALPMPPTRGRGRGRRSRGGRGRGSSSVDRAVSVGGTASTTPATQPRAPRMSRGASAVAKAIAMSRPRCVGGLKHQPDPERLKGLFSPSPQVFEEDTRMSADLSNSNQSMASLMEPPLTPQKQPDFLNNEESQSSMVSNVSMMDSNQGQSADAILGSALKRPKKKKMETCVAEDTDYSASSIAEYDWPPPKGCCPSKNRDTFMIQEQVALYLGITSFKRKYPDLPRRSVDMEERNWLQEKGLVSEKLCDLGITAVWASDILDIMYADFFDKYEEYKEYIRRKHLREIEAKQKALGLTVGAGRGLQARDRAMLSATKWNAYFNKSRKDERQSCMDLQTFTINQPQPRTAPTCTRLERSTSDLIRAVAEEANIPAPPNLLPPRDYDEAFRNSDYAYPLTVVPDQFSMAYRQFEPAELRAYPLDTALDKPPTDLMAQLLQAKSEAVGSDEIKTSAPAPKDLGQEQSAIKSVTVTAPVRRSRRSTRQQTDKVRTASSSSTSSAQSVSSASSGNGSSSDTESGDESDFSSTSSCSSSTGASSGAGSEDEDGNECSSSVRLSTCGVCLRSQHRNARDMPEAFIRCYTCRKRVHPSCVDMPPRMVGRVRNYNWQCAGCKCCIKCRSSQRPGKMLYCEQCDRGYHIYCLGLRTVPDGRWSCERCCFCMRCGATKPEGLPQVAALSQASGGPSANGDRSKAARNKRLKWVHEYRIDHVTKIREHAAMFCVPCARNKPAKRQSAAGAAGAAAVTPVLEATSAQTDDSPMPSPGLTTNGGRALSPTAALSPKAAVPVASLPPVLEATTVTTNIAGTIGRRQAGNAVNITTMQCSSSSSSNFSGNGVTEDAANVTATGTATAAAGAPAATPIGIAPPPVVA.

8 disordered regions span residues 1 to 208 (MNDL…RRVE), 313 to 347 (MPAK…SSLA), 458 to 564 (EEKP…AQSQ), 744 to 794 (DTQD…DPAR), 821 to 916 (DLEG…KSRR), 929 to 1029 (VSVG…NNNS), 1044 to 1082 (CSSS…SDPL), and 1099 to 1196 (QQLR…SAVA). Residues 10–60 (VAATSSSGSESGTAVESAAATSTAGSAGAAGRPQSNCSANSNAKSVAASST) are compositionally biased toward low complexity. The span at 67–81 (VSSTSSPAQRDQQLN) shows a compositional bias: polar residues. Positions 118 to 128 (SPPPTLPPPTT) are enriched in pro residues. Residues 129 to 168 (PCDDAPSTTGASASASSASGEAPSAASAAGAAGGPMAATA) are compositionally biased toward low complexity. The span at 189–199 (ANPNSNANESQ) shows a compositional bias: polar residues. Positions 321 to 347 (LSSLSPASASSSSASSSSSSSSSSSLA) are enriched in low complexity. A compositionally biased stretch (polar residues) spans 485–494 (GGESNSSSQE). The segment covering 525-534 (SLSKEHDPKI) has biased composition (basic and acidic residues). The segment covering 543–563 (ASNGIASGGSKASKASKSAQS) has biased composition (low complexity). Positions 744 to 758 (DTQDNNNENHLKRTN) are enriched in basic and acidic residues. Composition is skewed to polar residues over residues 759 to 769 (SEGNESPSSRL) and 828 to 844 (PPTQ…NGAL). Pro residues predominate over residues 861 to 870 (PATPQPPPVA). 2 stretches are compositionally biased toward basic and acidic residues: residues 936–945 (ADMKAKEKES) and 963–972 (ESPKTRDHRP). 2 stretches are compositionally biased toward low complexity: residues 978–990 (RTTT…LQPT) and 1018–1029 (SSESESNNNNNS). A compositionally biased stretch (polar residues) spans 1053–1080 (GAAANQQVIGGSGSSSMLPPTTILSSSD). The span at 1103–1112 (SSRPSSISCG) shows a compositional bias: low complexity. Residues 1147–1158 (GRGRGRRSRGGR) show a composition bias toward basic residues. The segment covering 1161-1173 (GSSSVDRAVSVGG) has biased composition (low complexity). The interval 1340–1573 (MIQEQVALYL…PPTDLMAQLL (234 aa)) is SAY. Residues 1579–1685 (AVGSDEIKTS…AGSEDEDGNE (107 aa)) form a disordered region. Low complexity-rich tracts occupy residues 1627–1652 (TASS…SSDT) and 1660–1677 (FSST…SGAG). The PHD-type 1; degenerate zinc finger occupies 1694–1751 (TCGVCLRSQHRNARDMPEAFIRCYTCRKRVHPSCVDMPPRMVGRVRNYNWQCAGCKCC). Residues 1753–1796 (KCRSSQRPGKMLYCEQCDRGYHIYCLGLRTVPDGRWSCERCCFC) form a PHD-type 2; degenerate zinc finger. Residues 1887-1911 (TSAQTDDSPMPSPGLTTNGGRALSP) are disordered.

Belongs to the SAYP family. In terms of tissue distribution, widely expressed. Highly expressed in ovary. Expressed in nursing cells and growing oocytes at all stages of development and accumulates in mature oocytes. Expressed in the nuclei of syncytium blastoderm of early embryos and in the nuclei of different tissues of late embryos, larvae, and adults.

It localises to the nucleus. The protein localises to the cytoplasm. The protein resides in the chromosome. Functionally, essential transcription regulator during early development. Coactivates transcription of some euchromatin genes and repress transcription in of euchromatin genes translocated to heterochromatin. In Drosophila melanogaster (Fruit fly), this protein is Supporter of activation of yellow protein (e(y)3).